The following is a 428-amino-acid chain: MLDPKFLRNELAVTAERLATRGFILDVAHLTQLEEKRKSLQVATEELQASRNAISKSIGQAKARGEDVDAIMAQVGDLGAQLDAKKVELAAVLEEVNAIAMSMPNLPDESAPIGADETENVEVRRWGSPRSFDFPIKDHIDLGEGLNGLDFKSAVKITGSRFIVMKGQIARLNRALGQFMLDLHTTEHGYTEAYVPLLVNEASLLGTGQLPKFGEDLFHTKPATEEGQGLSLIPTAEVPLTNLVRDSIVDEDELPIKLTAHTACFRSEAGSYGKDTRGLIRQHQFDKVELVQLVKPEDSMAALEVLTGHAETVLQRLGLPYRTVVLCTGDMGFGSSKTYDIEVWLPGQNTYREISSCSNMKDFQARRMQARYRVKADNKPVLLHTLNGSGLAVGRTLVAILENYQNADGSVTVPEALRPYMGGLTQIG.

235-237 (TAE) is a binding site for L-serine. ATP is bound at residue 266 to 268 (RSE). Glu289 is a binding site for L-serine. 353-356 (EISS) serves as a coordination point for ATP. Ser389 contributes to the L-serine binding site.

Belongs to the class-II aminoacyl-tRNA synthetase family. Type-1 seryl-tRNA synthetase subfamily. Homodimer. The tRNA molecule binds across the dimer.

The protein resides in the cytoplasm. It carries out the reaction tRNA(Ser) + L-serine + ATP = L-seryl-tRNA(Ser) + AMP + diphosphate + H(+). The catalysed reaction is tRNA(Sec) + L-serine + ATP = L-seryl-tRNA(Sec) + AMP + diphosphate + H(+). It participates in aminoacyl-tRNA biosynthesis; selenocysteinyl-tRNA(Sec) biosynthesis; L-seryl-tRNA(Sec) from L-serine and tRNA(Sec): step 1/1. Catalyzes the attachment of serine to tRNA(Ser). Is also able to aminoacylate tRNA(Sec) with serine, to form the misacylated tRNA L-seryl-tRNA(Sec), which will be further converted into selenocysteinyl-tRNA(Sec). This is Serine--tRNA ligase from Shewanella oneidensis (strain ATCC 700550 / JCM 31522 / CIP 106686 / LMG 19005 / NCIMB 14063 / MR-1).